The primary structure comprises 429 residues: Adenylosuccinate synthetase (429 aa).

GTP is bound by residues 12-18 (GDEGKGK) and 40-42 (GHT). Asp-13 functions as the Proton acceptor in the catalytic mechanism. Residues Asp-13 and Gly-40 each contribute to the Mg(2+) site. Residues 13–16 (DEGK), 38–41 (NAGH), Thr-128, Arg-142, Gln-223, Thr-238, and Arg-302 contribute to the IMP site. Catalysis depends on His-41, which acts as the Proton donor. 298 to 304 (TVTGRPR) provides a ligand contact to substrate. Residues Arg-304, 330 to 332 (LLD), and 412 to 414 (SVG) each bind GTP.

It belongs to the adenylosuccinate synthetase family. As to quaternary structure, homodimer. Mg(2+) is required as a cofactor.

The protein resides in the cytoplasm. It catalyses the reaction IMP + L-aspartate + GTP = N(6)-(1,2-dicarboxyethyl)-AMP + GDP + phosphate + 2 H(+). It functions in the pathway purine metabolism; AMP biosynthesis via de novo pathway; AMP from IMP: step 1/2. Functionally, plays an important role in the de novo pathway of purine nucleotide biosynthesis. Catalyzes the first committed step in the biosynthesis of AMP from IMP. This chain is Adenylosuccinate synthetase, found in Lactobacillus helveticus (strain DPC 4571).